Reading from the N-terminus, the 218-residue chain is Carboxylesterase 2 (218 aa).

Active-site charge relay system residues include serine 114, aspartate 168, and histidine 199.

The protein belongs to the AB hydrolase superfamily. AB hydrolase 2 family. As to quaternary structure, homodimer.

The catalysed reaction is a carboxylic ester + H2O = an alcohol + a carboxylate + H(+). In terms of biological role, hydrolyzes carboxylic ester bonds with relatively broad substrate specificity. The polypeptide is Carboxylesterase 2 (estB) (Pseudomonas fluorescens).